Here is a 488-residue protein sequence, read N- to C-terminus: Protein kinase C and casein kinase substrate in neurons 2 protein (488 aa).

The 272-residue stretch at 11 to 282 (VEVSSDSFWE…SIKAADAVED (272 aa)) folds into the F-BAR domain. Residues 25-274 (KRTVKRIDDG…GIYRELEQSI (250 aa)) are a coiled coil. Lysine 53 is modified (N6-acetyllysine). Residues 163 to 176 (CKEEKLAVSREANS) are compositionally biased toward basic and acidic residues. The segment at 163–183 (CKEEKLAVSREANSKADPSLN) is disordered. Position 273 is a phosphoserine (serine 273). Serine 315 carries the phosphoserine; by PKC modification. A disordered region spans residues 316–429 (RREKKKAADG…PFDEDTTSGT (114 aa)). A compositionally biased stretch (polar residues) spans 329–364 (TGINQTGDQSGQNKPSSNLSVPSNPAQSTQLQSSYN). An NPF1 motif is present at residues 364 to 366 (NPF). A Phosphoserine; by IKKB modification is found at serine 375. The segment covering 386 to 396 (NVSSYEKTQNY) has biased composition (polar residues). Serine 401 is subject to Phosphoserine. Residues 406-418 (NNPFSSTDANGDS) show a composition bias toward polar residues. The short motif at 407-409 (NPF) is the NPF2 element. An NPF3 motif is present at residues 419 to 421 (NPF). Positions 428–488 (GTEVRVRALY…YPANYVEAIQ (61 aa)) constitute an SH3 domain. Phosphoserine is present on serine 448.

It belongs to the PACSIN family. As to quaternary structure, homodimer. May form heterooligomers with other PACSINs. Interacts (via NPF motifs) with EHD1 (via EH domain). Interacts with EHD3. Interacts (via the SH3 domain) with MICALL1. Interacts with RAC1. Interacts (via SH3 domain) with DNM1, SYN1, SYNJ1 and WASL. Interacts with CAV1. Interacts with TRPV4. Forms a complex with EHD4 and MICALL1; the complex controls CDH5 trafficking and coordinates angiogenesis. Phosphorylated by casein kinase 2 (CK2) and protein kinase C (PKC). Phosphorylation by PKC probably decreases the membrane binding and tubulation capacities of PACSIN2, thereby modulating the lifetime of caveolae. Widely expressed (at protein level). Isoforms 1/3 are predominantly expressed in heart and in PC-12 cells, a pheochromocytoma cell line (at protein level). Isoforms 2/4 are widely expressed with highest levels in muscle, testis and brain (at protein level).

The protein localises to the cytoplasm. Its subcellular location is the cytoskeleton. It is found in the cytoplasmic vesicle membrane. The protein resides in the cell projection. It localises to the ruffle membrane. The protein localises to the early endosome. Its subcellular location is the recycling endosome membrane. It is found in the cell membrane. The protein resides in the membrane. It localises to the caveola. The protein localises to the cell junction. Its subcellular location is the adherens junction. Functionally, regulates the morphogenesis and endocytosis of caveolae. Lipid-binding protein that is able to promote the tubulation of the phosphatidic acid-containing membranes it preferentially binds. Plays a role in intracellular vesicle-mediated transport. Involved in the endocytosis of cell-surface receptors like the EGF receptor, contributing to its internalization in the absence of EGF stimulus. Facilitates endothelial front-rear polarity during migration by recruiting EHD4 and MICALL1 to asymmetric adherens junctions between leader and follower cells. This is Protein kinase C and casein kinase substrate in neurons 2 protein (Pacsin2) from Rattus norvegicus (Rat).